A 68-amino-acid chain; its full sequence is Conotoxin Cal14.13c (68 aa).

An N-terminal signal peptide occupies residues Met1–Glu20. Residues Ala21–Gly68 constitute a propeptide that is removed on maturation. A Leucine amide modification is found at Leu66.

Post-translationally, contains 2 disulfide bonds. In terms of tissue distribution, expressed by the venom duct.

The protein resides in the secreted. Its function is as follows. Probable neurotoxin with unknown target. Possibly targets ion channels. The protein is Conotoxin Cal14.13c of Californiconus californicus (California cone).